The sequence spans 146 residues: Hemoglobin subunit beta (146 aa).

Position 1 is an N-acetylvaline (valine 1). One can recognise a Globin domain in the interval 2–146 (HLTADEKTAV…VANALAHKYH (145 aa)). Threonine 12 carries the phosphothreonine modification. Serine 44 carries the phosphoserine modification. Lysine 59 bears the N6-acetyllysine mark. A heme b-binding site is contributed by histidine 63. Lysine 82 carries the post-translational modification N6-acetyllysine. Histidine 92 contacts heme b. S-nitrosocysteine is present on cysteine 93. Residue lysine 144 is modified to N6-acetyllysine.

It belongs to the globin family. In terms of assembly, heterotetramer of two alpha chains and two beta chains. As to expression, red blood cells.

Involved in oxygen transport from the lung to the various peripheral tissues. The protein is Hemoglobin subunit beta (HBB) of Procyon lotor (Raccoon).